Reading from the N-terminus, the 620-residue chain is 1-deoxy-D-xylulose-5-phosphate synthase (620 aa).

Thiamine diphosphate is bound by residues His-80 and Gly-121 to Ser-123. Residue Asp-152 coordinates Mg(2+). Residues Gly-153–Ala-154, Asn-181, Tyr-288, and Glu-370 each bind thiamine diphosphate. Asn-181 serves as a coordination point for Mg(2+).

Belongs to the transketolase family. DXPS subfamily. Homodimer. The cofactor is Mg(2+). Thiamine diphosphate is required as a cofactor.

The catalysed reaction is D-glyceraldehyde 3-phosphate + pyruvate + H(+) = 1-deoxy-D-xylulose 5-phosphate + CO2. The protein operates within metabolic intermediate biosynthesis; 1-deoxy-D-xylulose 5-phosphate biosynthesis; 1-deoxy-D-xylulose 5-phosphate from D-glyceraldehyde 3-phosphate and pyruvate: step 1/1. Functionally, catalyzes the acyloin condensation reaction between C atoms 2 and 3 of pyruvate and glyceraldehyde 3-phosphate to yield 1-deoxy-D-xylulose-5-phosphate (DXP). This chain is 1-deoxy-D-xylulose-5-phosphate synthase, found in Salmonella typhi.